Reading from the N-terminus, the 329-residue chain is Diaminopimelate epimerase (329 aa).

Asn14 and Asn73 together coordinate substrate. The active-site Proton donor is Cys82. Substrate contacts are provided by residues Gly83–Asn84, Asn170, Asn206, and Glu224–Arg225. Cys233 functions as the Proton acceptor in the catalytic mechanism. A substrate-binding site is contributed by Gly234–Thr235.

Belongs to the diaminopimelate epimerase family. Homodimer.

It localises to the cytoplasm. It carries out the reaction (2S,6S)-2,6-diaminopimelate = meso-2,6-diaminopimelate. It participates in amino-acid biosynthesis; L-lysine biosynthesis via DAP pathway; DL-2,6-diaminopimelate from LL-2,6-diaminopimelate: step 1/1. Functionally, catalyzes the stereoinversion of LL-2,6-diaminopimelate (L,L-DAP) to meso-diaminopimelate (meso-DAP), a precursor of L-lysine and an essential component of the bacterial peptidoglycan. This chain is Diaminopimelate epimerase, found in Listeria monocytogenes serotype 4b (strain CLIP80459).